A 170-amino-acid chain; its full sequence is Phosphopantetheine adenylyltransferase (170 aa).

Residue Thr-9 participates in substrate binding. ATP is bound by residues 9–10 (TF) and His-17. Residues Lys-41, Leu-73, and Arg-87 each contribute to the substrate site. ATP-binding positions include 88-90 (GLR), Glu-98, and 123-129 (YQFISGT).

It belongs to the bacterial CoaD family. Homohexamer. Requires Mg(2+) as cofactor.

The protein localises to the cytoplasm. It carries out the reaction (R)-4'-phosphopantetheine + ATP + H(+) = 3'-dephospho-CoA + diphosphate. Its pathway is cofactor biosynthesis; coenzyme A biosynthesis; CoA from (R)-pantothenate: step 4/5. In terms of biological role, reversibly transfers an adenylyl group from ATP to 4'-phosphopantetheine, yielding dephospho-CoA (dPCoA) and pyrophosphate. The polypeptide is Phosphopantetheine adenylyltransferase (Bordetella petrii (strain ATCC BAA-461 / DSM 12804 / CCUG 43448)).